The sequence spans 347 residues: Nuclear distribution protein nudE-like 1 (347 aa).

A coiled-coil region spans residues 28–190 (QSFQEARDEL…LAVRERQQEV (163 aa)). Residues 56–166 (VQAEQRNRDL…LDEKESLLVS (111 aa)) are self-association. The tract at residues 64–189 (DLQADNQRLK…ELAVRERQQE (126 aa)) is interaction with KATNB1. The segment at 114–133 (YVRELEQANDDLERAKRATI) is required for interaction with PAFAH1B1. Positions 175-347 (RDLRQELAVR…SAPGMLPLSV (173 aa)) are interaction with CENPF. The interval 189–256 (EVTRKSAPSS…SARISALNIV (68 aa)) is interaction with YWHAE. Positions 191–347 (TRKSAPSSPT…SAPGMLPLSV (157 aa)) are interaction with NEFL. Residues 195–256 (APSSPTLDCE…SARISALNIV (62 aa)) form an interaction with KATNA1 region. A Phosphoserine modification is found at serine 215. Position 219 is a phosphothreonine; by CDK1 and MAPK1 (threonine 219). A Phosphoserine modification is found at serine 231. Positions 241 to 280 (TSPLTPSARISALNIVGDLLRKVGALESKLAACRNFAKDQ) are interaction with DISC1. Serine 242 is modified (phosphoserine; by CDK1). Threonine 245 bears the Phosphothreonine; by CDK1 and MAPK1 mark. A required for localization to the centrosome and interaction with dynein, dynactin, tubulin gamma, PCM1 and PCNT region spans residues 256-291 (VGDLLRKVGALESKLAACRNFAKDQASRKSYISGNV). Cysteine 273 is lipidated: S-palmitoyl cysteine; by ZDHHC2, ZDHHC3 and ZDHHC7. Residues 314–347 (KGAVNGFDPAPPPPDPGLGSSRPSSAPGMLPLSV) are disordered. At serine 346 the chain carries Phosphoserine.

This sequence belongs to the nudE family. Self-associates. Interacts with DISC1, dynein, dynactin, tubulin gamma, KATNA1, KATNB1, microtubules, PAFAH1B1, PCM1, PCNT, and YWHAE. Interacts directly with NEFL and indirectly with NEFH. Interacts (via C-terminus) with CENPF. Interacts with ZNF365. Interacts with PLEKHM1 (via N- and C-terminus). Interacts with GTP-bound RAB9A; the interaction may lead to RAB9A-dynein motor tethering. In terms of processing, phosphorylated in mitosis. Can be phosphorylated by CDK1, CDK5 and MAPK1. Phosphorylation by CDK5 promotes interaction with KATNA1 and YWHAE. Palmitoylation at Cys-273 reduces affinity for dynein.

It is found in the cytoplasm. The protein resides in the cytoskeleton. Its subcellular location is the microtubule organizing center. It localises to the centrosome. The protein localises to the chromosome. It is found in the centromere. The protein resides in the kinetochore. Its subcellular location is the spindle. In terms of biological role, required for organization of the cellular microtubule array and microtubule anchoring at the centrosome. May regulate microtubule organization at least in part by targeting the microtubule severing protein KATNA1 to the centrosome. Also positively regulates the activity of the minus-end directed microtubule motor protein dynein. May enhance dynein-mediated microtubule sliding by targeting dynein to the microtubule plus ends. Required for several dynein- and microtubule-dependent processes such as the maintenance of Golgi integrity, the centripetal motion of secretory vesicles and the coupling of the nucleus and centrosome. Also required during brain development for the migration of newly formed neurons from the ventricular/subventricular zone toward the cortical plate. Required for mitosis in some cell types but appears to be dispensible for mitosis in cortical neuronal progenitors, which instead requires NDE1. Facilitates the polymerization of neurofilaments from the individual subunits NEFH and NEFL. Positively regulates lysosome peripheral distribution and ruffled border formation in osteoclasts. Plays a role, together with DISC1, in the regulation of neurite outgrowth. May act as a RAB9A/B effector that tethers RAB9-associated late endosomes to the dynein motor for their retrograde transport to the trans-Golgi network. The protein is Nuclear distribution protein nudE-like 1 (NDEL1) of Macaca fascicularis (Crab-eating macaque).